We begin with the raw amino-acid sequence, 151 residues long: MFRGANAVSLDAKGRLAMPSRYRDELDSRCNGQLIVTIDAVDPCLCVYPLDEWEQIEAKLRALPSLREENRRLQRLLIGNAVDLELDGSGRFLVPPRLREYAKLDKKAMLVGQLNKFQLWDEDAWNAVSAADLAAIQQPGAMPDDLRDLIL.

SpoVT-AbrB domains lie at A5 to E52 and A81 to A124.

Belongs to the MraZ family. In terms of assembly, forms oligomers.

It is found in the cytoplasm. The protein resides in the nucleoid. This chain is Transcriptional regulator MraZ, found in Pseudomonas putida (strain W619).